A 186-amino-acid polypeptide reads, in one-letter code: ATP synthase subunit delta (186 aa).

Belongs to the ATPase delta chain family. As to quaternary structure, F-type ATPases have 2 components, F(1) - the catalytic core - and F(0) - the membrane proton channel. F(1) has five subunits: alpha(3), beta(3), gamma(1), delta(1), epsilon(1). F(0) has three main subunits: a(1), b(2) and c(10-14). The alpha and beta chains form an alternating ring which encloses part of the gamma chain. F(1) is attached to F(0) by a central stalk formed by the gamma and epsilon chains, while a peripheral stalk is formed by the delta and b chains.

It localises to the cell inner membrane. In terms of biological role, f(1)F(0) ATP synthase produces ATP from ADP in the presence of a proton or sodium gradient. F-type ATPases consist of two structural domains, F(1) containing the extramembraneous catalytic core and F(0) containing the membrane proton channel, linked together by a central stalk and a peripheral stalk. During catalysis, ATP synthesis in the catalytic domain of F(1) is coupled via a rotary mechanism of the central stalk subunits to proton translocation. Functionally, this protein is part of the stalk that links CF(0) to CF(1). It either transmits conformational changes from CF(0) to CF(1) or is implicated in proton conduction. This Brucella suis biovar 1 (strain 1330) protein is ATP synthase subunit delta.